Here is a 162-residue protein sequence, read N- to C-terminus: Blue copper protein 1b (162 aa).

Positions Met-1–Ala-23 are cleaved as a signal peptide. Positions Thr-25–Ala-125 constitute a Phytocyanin domain. Residue His-65 coordinates Cu cation. Asn-71 is a glycosylation site (N-linked (GlcNAc...) asparagine). Cys-78 and Cys-112 are disulfide-bonded. 3 residues coordinate Cu cation: Cys-106, His-111, and Met-117. A helical transmembrane segment spans residues Val-142–Ala-162.

It is found in the membrane. This Medicago truncatula (Barrel medic) protein is Blue copper protein 1b.